Reading from the N-terminus, the 747-residue chain is Elongation factor G, mitochondrial (747 aa).

A mitochondrion-targeting transit peptide spans 1-32 (MTLITRVLNGNLPLRLSTLKAARQLQCGYSSH). The 278-residue stretch at 42-319 (ERIRNIGISA…AVVDYLPNPG (278 aa)) folds into the tr-type G domain. Residues 51–58 (AHIDSGKT), 118–122 (DTPGH), and 172–175 (NKLD) each bind GTP.

It belongs to the TRAFAC class translation factor GTPase superfamily. Classic translation factor GTPase family. EF-G/EF-2 subfamily.

The protein resides in the mitochondrion. It participates in protein biosynthesis; polypeptide chain elongation. In terms of biological role, mitochondrial GTPase that catalyzes the GTP-dependent ribosomal translocation step during translation elongation. During this step, the ribosome changes from the pre-translocational (PRE) to the post-translocational (POST) state as the newly formed A-site-bound peptidyl-tRNA and P-site-bound deacylated tRNA move to the P and E sites, respectively. Catalyzes the coordinated movement of the two tRNA molecules, the mRNA and conformational changes in the ribosome. Essential during development as it acts as a retrograde signal from mitochondria to the nucleus to slow down cell proliferation if mitochondrial energy output is low. The protein is Elongation factor G, mitochondrial of Drosophila mojavensis (Fruit fly).